Reading from the N-terminus, the 209-residue chain is DNA transformation protein TfoX1 (209 aa).

This sequence belongs to the Sxy/TfoX family.

Required for DNA transformation jointly with TfoY (tfoX2). The chain is DNA transformation protein TfoX1 from Aliivibrio fischeri (strain ATCC 700601 / ES114) (Vibrio fischeri).